Consider the following 335-residue polypeptide: Magnesium-protoporphyrin IX monomethyl ester [oxidative] cyclase (335 aa).

The protein belongs to the AcsF family. Fe cation is required as a cofactor.

The protein localises to the plastid. The protein resides in the chloroplast. It catalyses the reaction Mg-protoporphyrin IX 13-monomethyl ester + 3 NADPH + 3 O2 + 2 H(+) = 3,8-divinyl protochlorophyllide a + 3 NADP(+) + 5 H2O. It functions in the pathway porphyrin-containing compound metabolism; chlorophyll biosynthesis (light-independent). Catalyzes the formation of the isocyclic ring in chlorophyll biosynthesis. Mediates the cyclase reaction, which results in the formation of divinylprotochlorophyllide (Pchlide) characteristic of all chlorophylls from magnesium-protoporphyrin IX 13-monomethyl ester (MgPMME). The chain is Magnesium-protoporphyrin IX monomethyl ester [oxidative] cyclase from Cyanidioschyzon merolae (strain NIES-3377 / 10D) (Unicellular red alga).